The sequence spans 206 residues: Protein Nef (206 aa).

G2 is lipidated: N-myristoyl glycine; by host. S6 carries the post-translational modification Phosphoserine; by host. The interval E62–E65 is acidic; interacts with host PACS1 and PACS2; stabilizes the interaction of NEF/MHC-I with host AP1M1; necessary for MHC-I internalization. The segment at P69–P78 is SH3-binding; interaction with Src family tyrosine kinases. Residues P72–P75 carry the PxxP; stabilizes the interaction of NEF/MHC-I with host AP1M1; necessary for MHC-I internalization motif. Residues D108–W124 form a mediates dimerization, Nef-PTE1 interaction region. A mediates dimerization, Nef-PTE1 interaction, Nef-induced CD4 and MHC-I down-regulation and enhancement of infectivity region spans residues D108–W124. The segment at V148 to V180 is binding to ATP6V1H. A Dileucine internalization motif; necessary for CD4 internalization motif is present at residues L164–L165. The Diacidic; necessary for CD4 internalization motif lies at D174 to D175.

This sequence belongs to the lentivirus primate group Nef protein family. As to quaternary structure, monomer; cytosolic form. Homodimer; membrane bound form. Interacts with Nef associated p21-activated kinase (PAK2); this interaction activates PAK2. Associates with the Nef-MHC-I-AP1 complex; this complex is required for MHC-I internalization. Interacts (via C-terminus) with host PI3-kinase. Interacts with host PACS1; this interaction seems to be weak. Interacts with host PACS2. Interacts with host LCK and MAPK3; these interactions inhibit the kinase activity of the latter. Interacts with host ATP6V1H; this interaction may play a role in CD4 endocytosis. Associates with the CD4-Nef-AP2 complex; this complex is required for CD4 internalization. Interacts with host AP2 subunit alpha and AP2 subunit sigma2. Interacts with TCR-zeta chain; this interaction up-regulates the Fas ligand (FasL) surface expression. Interacts with host HCK, LYN, and SRC; these interactions activate the Src family kinases. Interacts with MAP3K5; this interaction inhibits the Fas and TNFR-mediated death signals. Interacts with beta-COP and PTE1. Interacts with human RACK1; this increases Nef phosphorylation by PKC. Interacts with TP53; this interaction decreases the half-life of TP53, protecting the infected cell against p53-mediated apoptosis. Post-translationally, the virion-associated Nef proteins are cleaved by the viral protease to release the soluble C-terminal core protein. Nef is probably cleaved concomitantly with viral structural proteins on maturation of virus particles. In terms of processing, myristoylated. Phosphorylated on serine residues, probably by host PKCdelta and theta.

The protein resides in the host cell membrane. It localises to the virion. It is found in the secreted. Its subcellular location is the host Golgi apparatus membrane. Its function is as follows. Factor of infectivity and pathogenicity, required for optimal virus replication. Alters numerous pathways of T-lymphocytes function and down-regulates immunity surface molecules in order to evade host defense and increase viral infectivity. Alters the functionality of other immunity cells, like dendritic cells, monocytes/macrophages and NK cells. In terms of biological role, in infected CD4(+) T-lymphocytes, down-regulates the surface MHC-I, mature MHC-II, CD4, CD28, CCR5 and CXCR4 molecules. Mediates internalization and degradation of host CD4 through the interaction of with the cytoplasmic tail of CD4, the recruitment of AP-2 (clathrin adapter protein complex 2), internalization through clathrin coated pits, and subsequent transport to endosomes and lysosomes for degradation. Diverts host MHC-I molecules to the trans-Golgi network-associated endosomal compartments by an endocytic pathway to finally target them for degradation. MHC-I down-regulation may involve AP-1 (clathrin adapter protein complex 1) or possibly Src family kinase-ZAP70/Syk-PI3K cascade recruited by PACS2. In consequence infected cells are masked for immune recognition by cytotoxic T-lymphocytes. Decreasing the number of immune receptors also prevents reinfection by more HIV particles (superinfection). Down-regulates host SERINC3 and SERINC5 thereby excluding these proteins from the viral particles. Virion infectivity is drastically higher when SERINC3 or SERINC5 are excluded from the viral envelope, because these host antiviral proteins impair the membrane fusion event necessary for subsequent virion penetration. Bypasses host T-cell signaling by inducing a transcriptional program nearly identical to that of anti-CD3 cell activation. Interaction with TCR-zeta chain up-regulates the Fas ligand (FasL). Increasing surface FasL molecules and decreasing surface MHC-I molecules on infected CD4(+) cells send attacking cytotoxic CD8+ T-lymphocytes into apoptosis. Functionally, plays a role in optimizing the host cell environment for viral replication without causing cell death by apoptosis. Protects the infected cells from apoptosis in order to keep them alive until the next virus generation is ready to strike. Inhibits the Fas and TNFR-mediated death signals by blocking MAP3K5/ASK1. Decreases the half-life of TP53, protecting the infected cell against p53-mediated apoptosis. Inhibits the apoptotic signals regulated by the Bcl-2 family proteins through the formation of a Nef/PI3-kinase/PAK2 complex that leads to activation of PAK2 and induces phosphorylation of host BAD. Its function is as follows. Extracellular Nef protein targets CD4(+) T-lymphocytes for apoptosis by interacting with CXCR4 surface receptors. The sequence is that of Protein Nef from Homo sapiens (Human).